The sequence spans 285 residues: Putative alkaline ceramidase dcd3B (285 aa).

The next 3 membrane-spanning stretches (helical) occupy residues 34-54, 77-97, and 104-124; these read TFSS…MMSA, VLFS…YHAT, and LFDE…ILTI. N131 is a glycosylation site (N-linked (GlcNAc...) asparagine). The next 4 membrane-spanning stretches (helical) occupy residues 141-161, 166-186, 200-220, and 236-256; these read RFLP…ITII, IILQ…SYMY, PKKF…SWLT, and LHAV…QFFI.

The protein belongs to the alkaline ceramidase family.

It is found in the membrane. This chain is Putative alkaline ceramidase dcd3B (dcd3B), found in Dictyostelium discoideum (Social amoeba).